A 714-amino-acid chain; its full sequence is Polyribonucleotide nucleotidyltransferase (714 aa).

Mg(2+) contacts are provided by Asp-487 and Asp-493. Positions 554-613 (PRIEVLQIPTDKIRDVIGTGGKVIREIVEKTGAKINIEDDGTVKVASANGESIRAAIKWI) constitute a KH domain. Positions 623–691 (GQIYDGTVVK…DRGKVRLSMK (69 aa)) constitute an S1 motif domain.

This sequence belongs to the polyribonucleotide nucleotidyltransferase family. Mg(2+) serves as cofactor.

It localises to the cytoplasm. The enzyme catalyses RNA(n+1) + phosphate = RNA(n) + a ribonucleoside 5'-diphosphate. In terms of biological role, involved in mRNA degradation. Catalyzes the phosphorolysis of single-stranded polyribonucleotides processively in the 3'- to 5'-direction. The protein is Polyribonucleotide nucleotidyltransferase of Afipia carboxidovorans (strain ATCC 49405 / DSM 1227 / KCTC 32145 / OM5) (Oligotropha carboxidovorans).